Reading from the N-terminus, the 261-residue chain is GTP cyclohydrolase FolE2 (261 aa).

It belongs to the GTP cyclohydrolase IV family.

The catalysed reaction is GTP + H2O = 7,8-dihydroneopterin 3'-triphosphate + formate + H(+). It participates in cofactor biosynthesis; 7,8-dihydroneopterin triphosphate biosynthesis; 7,8-dihydroneopterin triphosphate from GTP: step 1/1. Converts GTP to 7,8-dihydroneopterin triphosphate. This Herminiimonas arsenicoxydans protein is GTP cyclohydrolase FolE2.